A 367-amino-acid polypeptide reads, in one-letter code: Apolipoprotein A-V (367 aa).

Positions 1–20 (MVAVLTWALALLSAFATVQT) are cleaved as a signal peptide. Position 56 is a phosphoserine (serine 56). The disordered stretch occupies residues 71 to 90 (LGPLSGQGREPPGLPHDPEG).

It belongs to the apolipoprotein A1/A4/E family. In terms of assembly, interacts with GPIHBP1. Interacts with SORL1; this interaction leads to APOA5 internalization and sorting either to lysosomes and degradation, or to the trans-Golgi network. Post-translationally, phosphorylated by FAM20C in the extracellular medium.

It is found in the secreted. It localises to the early endosome. Its subcellular location is the late endosome. The protein localises to the golgi apparatus. The protein resides in the trans-Golgi network. Functionally, minor apolipoprotein mainly associated with HDL and to a lesser extent with VLDL. May also be associated with chylomicrons. Important determinant of plasma triglyceride (TG) levels by both being a potent stimulator of apo-CII lipoprotein lipase (LPL) TG hydrolysis and an inhibitor of the hepatic VLDL-TG production rate (without affecting the VLDL-apoB production rate). Activates poorly lecithin:cholesterol acyltransferase (LCAT) and does not enhance efflux of cholesterol from macrophages. Binds heparin. This chain is Apolipoprotein A-V (APOA5), found in Neomonachus schauinslandi (Hawaiian monk seal).